Reading from the N-terminus, the 148-residue chain is Nucleoside diphosphate kinase (148 aa).

K10, F58, R86, T92, R103, and N113 together coordinate ATP. The active-site Pros-phosphohistidine intermediate is the H116.

The protein belongs to the NDK family. The cofactor is Mg(2+).

It is found in the cytoplasm. The enzyme catalyses a 2'-deoxyribonucleoside 5'-diphosphate + ATP = a 2'-deoxyribonucleoside 5'-triphosphate + ADP. It catalyses the reaction a ribonucleoside 5'-diphosphate + ATP = a ribonucleoside 5'-triphosphate + ADP. Major role in the synthesis of nucleoside triphosphates other than ATP. The ATP gamma phosphate is transferred to the NDP beta phosphate via a ping-pong mechanism, using a phosphorylated active-site intermediate. In Thermoplasma acidophilum (strain ATCC 25905 / DSM 1728 / JCM 9062 / NBRC 15155 / AMRC-C165), this protein is Nucleoside diphosphate kinase.